The sequence spans 245 residues: tRNA1(Val) (adenine(37)-N6)-methyltransferase (245 aa).

It belongs to the methyltransferase superfamily. tRNA (adenine-N(6)-)-methyltransferase family.

It localises to the cytoplasm. It carries out the reaction adenosine(37) in tRNA1(Val) + S-adenosyl-L-methionine = N(6)-methyladenosine(37) in tRNA1(Val) + S-adenosyl-L-homocysteine + H(+). Specifically methylates the adenine in position 37 of tRNA(1)(Val) (anticodon cmo5UAC). This chain is tRNA1(Val) (adenine(37)-N6)-methyltransferase, found in Cronobacter sakazakii (strain ATCC BAA-894) (Enterobacter sakazakii).